Reading from the N-terminus, the 176-residue chain is Ribosome maturation factor RimM (176 aa).

The region spanning 96 to 176 (PEDEFYWRDL…QILVDWDPDF (81 aa)) is the PRC barrel domain.

Belongs to the RimM family. Binds ribosomal protein uS19.

The protein localises to the cytoplasm. In terms of biological role, an accessory protein needed during the final step in the assembly of 30S ribosomal subunit, possibly for assembly of the head region. Essential for efficient processing of 16S rRNA. May be needed both before and after RbfA during the maturation of 16S rRNA. It has affinity for free ribosomal 30S subunits but not for 70S ribosomes. The protein is Ribosome maturation factor RimM of Shewanella piezotolerans (strain WP3 / JCM 13877).